The following is a 504-amino-acid chain: Anaerobic nitric oxide reductase transcription regulator NorR (504 aa).

D57 is modified (4-aspartylphosphate). One can recognise a Sigma-54 factor interaction domain in the interval 187-416; sequence MIGLSPGMTQ…LEHAIHRAVV (230 aa). ATP contacts are provided by residues 215-222 and 278-287; these read GETGTGKE and ADNGTLFLDE. Positions 479–498 form a DNA-binding region, H-T-H motif; that stretch reads WAACARMLETDVANLHRLAK.

It functions in the pathway nitrogen metabolism; nitric oxide reduction. Functionally, required for the expression of anaerobic nitric oxide (NO) reductase, acts as a transcriptional activator for at least the norVW operon. Activation also requires sigma-54. This Escherichia coli (strain 55989 / EAEC) protein is Anaerobic nitric oxide reductase transcription regulator NorR.